The primary structure comprises 217 residues: CXXC-type zinc finger protein 4 (217 aa).

Residues 1 to 20 form a disordered region; that stretch reads MHRNDSQRLGKPGGAPESLQ. Residues 122–163 form a CXXC-type zinc finger; that stretch reads AKKKRKRCGVCVPCKRLINCGVCSSCRNRKTGHQICKFRKCE. Residues Cys-129, Cys-132, Cys-135, Cys-141, Cys-144, Cys-147, Cys-157, and Cys-162 each coordinate Zn(2+).

Its subcellular location is the cytoplasm. Functionally, acts as a negative regulator of the Wnt signaling pathway required for anterior neural structure formation. Ectopic expression induces ventralization. Binds preferentially to DNA containing cytidine-phosphate-guanosine (CpG) dinucleotides over CpH (H=A, T, and C), hemimethylated-CpG and hemimethylated-hydroxymethyl-CpG. The sequence is that of CXXC-type zinc finger protein 4 (cxxc4) from Xenopus laevis (African clawed frog).